Consider the following 412-residue polypeptide: MKIHSCLSAILLFLFFSASSAKQNVRTERISGSAGDVLEDDPVGKLKVYVYELPSKYNKKLLQKDPRCLTHMFAAEIFMHRFLLSSPVRTRNPDEADWFYTPIYPTCDLTPTGLPLPFKSPRMMRSSIQLISSNWPYWNRTEGADHFFVVPHDFGACFHYQEEKAIERGILPLLQRATLVQTFGQRNHVCLDEGSITIPPFAPPQKMQAHFIPPDIPRSIFVYFRGLFYDVNNDPEGGYYARGARAAVWENFKNNPLFDISTDHPTTYYEDMQRAIFCLCPLGWAPWSPRLVEAVVFGCIPVIIADDIVLPFADAIPWEEIGVFVAEKDVPELDTILTSIPTEVILRKQRLLANPSMKRAMLFPQPAQPGDAFHQILNGLARKLPHDKSIYLKTGEKALNWTAGPVADLKPW.

A helical; Signal-anchor for type II membrane protein membrane pass occupies residues 1–21 (MKIHSCLSAILLFLFFSASSA). The Lumenal segment spans residues 22-412 (KQNVRTERIS…AGPVADLKPW (391 aa)). 2 N-linked (GlcNAc...) asparagine glycosylation sites follow: Asn139 and Asn400.

It belongs to the glycosyltransferase 47 family. As to expression, limited to xylem cells. Expressed in the root tip, xylem cells of roots, and in the vasculature of roots, cotyledons and leaves.

It is found in the golgi apparatus membrane. In terms of biological role, involved in the synthesis of the hemicellulose glucuronoxylan, a major component of secondary cell walls. Probably involved in the elongation of glucuronoxylan xylosyl backbone, especially in the formation of GlcUA side chain of xylans. This Arabidopsis thaliana (Mouse-ear cress) protein is Probable beta-1,4-xylosyltransferase IRX10 (IRX10).